We begin with the raw amino-acid sequence, 245 residues long: MNPKSNPDTIFSAPIDKIGDFTFDERVAEVFPDMIQRSVPGYSNIISAIGMLAERFVKPHSNVYDLGCSLGAATLSMRRHIKQEGCQIIAVDNSKAMVERCKLHVNAYRSDTPVNVIEADIRNIDIENASVVVLNFTLQFLSPEDRYVLLEKIYAGLRPGGILILSEKYVFEDQVSNELLIDLHHDFKRANGYSELEISQKRSAIENVMRPDSKKQHKERFAQIGFSSYDVWFQCFNFGSMFAIK.

Residues Tyr42, 67-69 (GCS), 92-93 (DN), 120-121 (DI), Asn135, and Arg202 each bind S-adenosyl-L-methionine.

It belongs to the class I-like SAM-binding methyltransferase superfamily. Cx-SAM synthase family. As to quaternary structure, homodimer.

It catalyses the reaction prephenate + S-adenosyl-L-methionine = carboxy-S-adenosyl-L-methionine + 3-phenylpyruvate + H2O. Catalyzes the conversion of S-adenosyl-L-methionine (SAM) to carboxy-S-adenosyl-L-methionine (Cx-SAM). The sequence is that of Carboxy-S-adenosyl-L-methionine synthase from Vibrio vulnificus (strain YJ016).